Here is a 288-residue protein sequence, read N- to C-terminus: Cyclin-dependent kinase 2 homolog (288 aa).

Residues 4 to 284 (YHGLEKIGEG…AKQAIEHPYF (281 aa)) form the Protein kinase domain. Residues 10 to 18 (IGEGTYGVV) and K32 contribute to the ATP site. The residue at position 14 (T14) is a Phosphothreonine. Y15 carries the post-translational modification Phosphotyrosine. The active-site Proton acceptor is D125. A Phosphothreonine modification is found at T158.

The protein belongs to the protein kinase superfamily. CMGC Ser/Thr protein kinase family. CDC2/CDKX subfamily. May form a complex composed of at least the catalytic subunit CRK2 and a cyclin. Mg(2+) serves as cofactor.

It localises to the cytoplasm. The catalysed reaction is L-seryl-[protein] + ATP = O-phospho-L-seryl-[protein] + ADP + H(+). The enzyme catalyses L-threonyl-[protein] + ATP = O-phospho-L-threonyl-[protein] + ADP + H(+). It carries out the reaction [DNA-directed RNA polymerase] + ATP = phospho-[DNA-directed RNA polymerase] + ADP + H(+). Its activity is regulated as follows. Phosphorylation at Thr-14 or Tyr-15 inactivates the enzyme, while phosphorylation at Thr-158 activates it. Serine/threonine-protein kinase. Involved in the control of the cell cycle. Required for entry into S-phase and mitosis. Probable component of the kinase complex that phosphorylates the repetitive C-terminus of RNA polymerase II. The protein is Cyclin-dependent kinase 2 homolog of Plasmodium berghei (strain Anka).